Consider the following 315-residue polypeptide: Probable inactive acetaldehyde dehydrogenase 1 (315 aa).

NAD(+) contacts are provided by residues 14–17 (SGDV) and Asn-288.

This sequence belongs to the acetaldehyde dehydrogenase family.

The chain is Probable inactive acetaldehyde dehydrogenase 1 from Mycolicibacterium vanbaalenii (strain DSM 7251 / JCM 13017 / BCRC 16820 / KCTC 9966 / NRRL B-24157 / PYR-1) (Mycobacterium vanbaalenii).